The sequence spans 164 residues: Phosphopantetheine adenylyltransferase (164 aa).

Residue Ser9 coordinates substrate. ATP is bound by residues 9-10 and His17; that span reads SF. 3 residues coordinate substrate: Lys41, Leu73, and Lys87. ATP contacts are provided by residues 88-90, Glu98, and 123-129; these read GLR and NSFLSSS.

It belongs to the bacterial CoaD family. In terms of assembly, homohexamer. Mg(2+) is required as a cofactor.

The protein localises to the cytoplasm. The enzyme catalyses (R)-4'-phosphopantetheine + ATP + H(+) = 3'-dephospho-CoA + diphosphate. The protein operates within cofactor biosynthesis; coenzyme A biosynthesis; CoA from (R)-pantothenate: step 4/5. In terms of biological role, reversibly transfers an adenylyl group from ATP to 4'-phosphopantetheine, yielding dephospho-CoA (dPCoA) and pyrophosphate. The polypeptide is Phosphopantetheine adenylyltransferase (Clostridium kluyveri (strain ATCC 8527 / DSM 555 / NBRC 12016 / NCIMB 10680 / K1)).